An 866-amino-acid chain; its full sequence is MAAVDSDVVSLPRGRFRCCLCDVTTANRPSLDAHLKGRKHRDLVQLRATRKAQGLRSVFVSGFPRDVGSAQLSEYFQTFGPVANIVMDKDKGVFAIVEMGDISAREAVLSQPKHSLGGHTLRVRPREQKEFQSPASKSPKGVDSNSHQLAQALAEAADVGAQMVKLVELRELSEAERQLRTLVVALMQEVFTEFFPGCVVHPFGSSVNSFDVHGCDLDLFLDLGDMEEPQPDPQTPKLPEASSLDSTLASSLDPQVLACTPASLDSLSPTSLQDSEALDFETPSSLAPQTPDSALGSDTVTSPQSLPPVSPLEEDRGEGKHRKELELAEASKDEKEEATAVLELVGSILRGCVPGVYRVQTVPSARRPVVKFCHRPSGLHGDISLSNRLALYNSRFLNLCSEMDSRVRPLVYTLRCWAQHNGLSGGGPLLNNYALTLLVIYFLQTRDPPVLPTVAQLTQRSGEGEQVEVDGWDCSFPKDASRLEPSTNVEPLSSLLAQFFSCVSCWDLSGSLLSLREGQALMVAGGLPSDLWEGLRLGPMNLQDPFDLSHNVAANVTSRVAKRLQSSCGAAASYCRSLQYQQRSSRGRDWGLLPLLQPSSPSSLLSAKLIPLPSAPFPQIITALVSVLREALGCHIEQGTKRRRSEGARSKDSPLGGANKRPRLSGQEKSCEEGKEEPQGCAGDHSENEVEEMVIELRETPQDWALLHCGPPGELPLMTAKCLDKTAEQNPMEPEGAGEGSPGETEKEASHPSSVSWRCALWHQIWQGRRRARRRFQQQTKEEGRGGPSTGAEWLAVEARVTQELKGPKSEQQRLQGEPLLTFVASASQAEQTLTVAPLQDPQGLFPGLHHFLQVFIPQALKNLLK.

The Matrin-type zinc finger occupies 16-46; it reads FRCCLCDVTTANRPSLDAHLKGRKHRDLVQL. The region spanning 56 to 128 is the RRM domain; it reads RSVFVSGFPR…HTLRVRPREQ (73 aa). A disordered region spans residues 116-147; sequence LGGHTLRVRPREQKEFQSPASKSPKGVDSNSH. Serine 205 serves as a coordination point for ATP. Mg(2+) contacts are provided by aspartate 216 and aspartate 218. Residues aspartate 216 and aspartate 218 each contribute to the UTP site. 2 disordered regions span residues 223–249 and 267–321; these read LGDM…STLA and LSPT…EGKH. Polar residues predominate over residues 282 to 304; the sequence is TPSSLAPQTPDSALGSDTVTSPQ. Residue asparagine 393 coordinates ATP. UTP-binding residues include asparagine 393, arginine 415, tyrosine 433, and histidine 550. The 59-residue stretch at 492–550 folds into the PAP-associated domain; that stretch reads LSSLLAQFFSCVSCWDLSGSLLSLREGQALMVAGGLPSDLWEGLRLGPMNLQDPFDLSH. The tract at residues 599-866 is KA1; binds the bulging loops of U6 snRNA but is dispensable for terminal uridylyltransferase activity; sequence SSPSSLLSAK…IPQALKNLLK (268 aa). Disordered regions lie at residues 638 to 687, 728 to 755, and 773 to 792; these read QGTK…DHSE, EQNP…PSSV, and RRRF…STGA. Residues 669–687 show a composition bias toward basic and acidic residues; the sequence is KSCEEGKEEPQGCAGDHSE. 2 positions are modified to phosphoserine: serine 686 and serine 741.

It belongs to the DNA polymerase type-B-like family. In terms of assembly, associates with the cleavage and polyadenylation specificity factor (CPSF) complex. Interacts with CPSF1 and CPSF3; the interaction is direct. Interacts with PIP5K1A. Mg(2+) serves as cofactor. Requires Mn(2+) as cofactor. Phosphorylated by CK1 in the proline-rich (Pro-rich) region.

It is found in the nucleus. It localises to the nucleolus. The protein localises to the nucleus speckle. The catalysed reaction is RNA(n) + UTP = RNA(n)-3'-uridine ribonucleotide + diphosphate. It carries out the reaction RNA(n) + ATP = RNA(n)-3'-adenine ribonucleotide + diphosphate. With respect to regulation, adenylyltransferase activity is specifically phosphatidylinositol 4,5-bisphosphate (PtdIns(4,5)P2). Its function is as follows. Poly(A) polymerase that creates the 3'-poly(A) tail of specific pre-mRNAs. Localizes to nuclear speckles together with PIP5K1A and mediates polyadenylation of a select set of mRNAs, such as HMOX1. In addition to polyadenylation, it is also required for the 3'-end cleavage of pre-mRNAs: binds to the 3'UTR of targeted pre-mRNAs and promotes the recruitment and assembly of the CPSF complex on the 3'UTR of pre-mRNAs. In addition to adenylyltransferase activity, also has uridylyltransferase activity. However, the ATP ratio is higher than UTP in cells, suggesting that it functions primarily as a poly(A) polymerase. Acts as a specific terminal uridylyltransferase for U6 snRNA in vitro: responsible for a controlled elongation reaction that results in the restoration of the four 3'-terminal UMP-residues found in newly transcribed U6 snRNA. Not involved in replication-dependent histone mRNA degradation. The polypeptide is Speckle targeted PIP5K1A-regulated poly(A) polymerase (Tut1) (Rattus norvegicus (Rat)).